The chain runs to 534 residues: Prolyl 4-hydroxylase subunit alpha-1 (534 aa).

The N-terminal stretch at 1 to 17 (MIWGVLMMGILLPQCSA) is a signal peptide. A glycan (N-linked (GlcNAc...) asparagine) is linked at Asn113. A TPR repeat occupies 205 to 238 (VSVLDYLSYAVYQQGDLDKALLLTKKLLELDPEH). Asn259 carries an N-linked (GlcNAc...) asparagine glycan. Residues 411–519 (TAEELQVANY…KWVSNKWLHE (109 aa)) enclose the Fe2OG dioxygenase domain. Fe cation contacts are provided by His429, Asp431, and His500. Residue Lys510 coordinates 2-oxoglutarate.

The protein belongs to the P4HA family. As to quaternary structure, heterotetramer of two alpha-1 chains and two beta chains (P4HB)(the beta chain is the multi-functional PDI), where P4HB plays the role of a structural subunit; this tetramer catalyzes the formation of 4-hydroxyproline in collagen. The cofactor is Fe(2+). Requires L-ascorbate as cofactor.

It localises to the endoplasmic reticulum lumen. It carries out the reaction L-prolyl-[collagen] + 2-oxoglutarate + O2 = trans-4-hydroxy-L-prolyl-[collagen] + succinate + CO2. Catalyzes the post-translational formation of 4-hydroxyproline in -Xaa-Pro-Gly- sequences in collagens and other proteins. This is Prolyl 4-hydroxylase subunit alpha-1 (P4ha1) from Rattus norvegicus (Rat).